The chain runs to 59 residues: uncharacterized protein (59 aa).

A helical membrane pass occupies residues 7–27; it reads LLLLVAIALISAFALTVTGVV.

Its subcellular location is the membrane. This is an uncharacterized protein from Pyrobaculum aerophilum (strain ATCC 51768 / DSM 7523 / JCM 9630 / CIP 104966 / NBRC 100827 / IM2).